We begin with the raw amino-acid sequence, 318 residues long: Pantothenate kinase (318 aa).

Position 96-103 (96-103) interacts with ATP; that stretch reads GSVAVGKS.

Belongs to the prokaryotic pantothenate kinase family.

The protein resides in the cytoplasm. It catalyses the reaction (R)-pantothenate + ATP = (R)-4'-phosphopantothenate + ADP + H(+). The protein operates within cofactor biosynthesis; coenzyme A biosynthesis; CoA from (R)-pantothenate: step 1/5. This is Pantothenate kinase from Rhodopseudomonas palustris (strain BisA53).